A 236-amino-acid polypeptide reads, in one-letter code: Alpha-tubulin N-acetyltransferase (236 aa).

In terms of domain architecture, N-acetyltransferase spans 21–201; that stretch reads ASVPDGVSRW…NKFVVFHGFF (181 aa). Acetyl-CoA contacts are provided by residues 134–147 and 171–180; these read FYVD…GYGK and SDKLLGFMKK. The tract at residues 217 to 236 is disordered; sequence SPTGAAAAATGTKAKNEMPG. A compositionally biased stretch (low complexity) spans 219 to 229; the sequence is TGAAAAATGTK.

It belongs to the acetyltransferase ATAT1 family.

The catalysed reaction is L-lysyl-[alpha-tubulin] + acetyl-CoA = N(6)-acetyl-L-lysyl-[alpha-tubulin] + CoA + H(+). Specifically acetylates 'Lys-40' in alpha-tubulin on the lumenal side of microtubules. Promotes microtubule destabilization and accelerates microtubule dynamics; this activity may be independent of acetylation activity. Acetylates alpha-tubulin with a slow enzymatic rate, due to a catalytic site that is not optimized for acetyl transfer. Enters the microtubule through each end and diffuses quickly throughout the lumen of microtubules. Acetylates only long/old microtubules because of its slow acetylation rate since it does not have time to act on dynamically unstable microtubules before the enzyme is released. This Leishmania braziliensis protein is Alpha-tubulin N-acetyltransferase.